A 1056-amino-acid chain; its full sequence is Kinesin-like protein KIF11 (1056 aa).

The Kinesin motor domain maps to 18 to 359 (NIQVVVRCRP…LEYAHRAKNI (342 aa)). Position 105–112 (105–112 (GQTGTGKT)) interacts with ATP. The residue at position 146 (Lys146) is an N6-acetyllysine. Coiled coils occupy residues 364 to 480 (EVNQ…KEEY) and 736 to 763 (LEEK…DIVN). Thr458 carries the phosphothreonine modification. A Glycyl lysine isopeptide (Lys-Gly) (interchain with G-Cter in SUMO2) cross-link involves residue Lys477. Residue Thr925 is modified to Phosphothreonine. Thr926 is subject to Phosphothreonine; by CDK1. A Phosphoserine; by NEK6 modification is found at Ser1033. Lys1034 is covalently cross-linked (Glycyl lysine isopeptide (Lys-Gly) (interchain with G-Cter in ubiquitin)).

This sequence belongs to the TRAFAC class myosin-kinesin ATPase superfamily. Kinesin family. BimC subfamily. In terms of assembly, interacts with the thyroid hormone receptor in the presence of thyroid hormone. Component of a large chromatin remodeling complex, at least composed of MYSM1, PCAF, RBM10 and KIF11/TRIP5. Interacts (via C-terminus) with the kinase NEK6 in both interphase and mitosis. Interacts with RARRES1 and AGBL2. Interacts with TPX2. In terms of processing, phosphorylated exclusively on serine during S phase, but on both serine and Thr-926 during mitosis, so controlling the association of KIF11 with the spindle apparatus (probably during early prophase). A subset of this protein primarily localized at the spindle pole is phosphorylated by NEK6 during mitosis; phosphorylation is required for mitotic function. Post-translationally, ubiquitinated at Lys-1034 by UHRF1 via 'Lys-63'-linked ubiquitin chains, leading to interaction with spindle assembly factor TPX2, thereby ensuring accurate distribution to the spindles during metaphase.

The protein resides in the cytoplasm. It is found in the cytoskeleton. The protein localises to the spindle pole. Its function is as follows. Motor protein required for establishing a bipolar spindle and thus contributing to chromosome congression during mitosis. Required in non-mitotic cells for transport of secretory proteins from the Golgi complex to the cell surface. The chain is Kinesin-like protein KIF11 (KIF11) from Homo sapiens (Human).